A 433-amino-acid polypeptide reads, in one-letter code: Xylose isomerase (433 aa).

Residues His97 and Asp100 contribute to the active site. The Mg(2+) site is built by Glu228, Glu264, His267, Asp292, Asp303, Asp305, and Asp334.

The protein belongs to the xylose isomerase family. In terms of assembly, homotetramer. Mg(2+) is required as a cofactor.

The protein resides in the cytoplasm. It carries out the reaction alpha-D-xylose = alpha-D-xylulofuranose. The sequence is that of Xylose isomerase from Fervidobacterium gondwanense.